Here is a 538-residue protein sequence, read N- to C-terminus: CTP synthase (538 aa).

Residues 1–267 (MDRAKFIFVT…LTPIARRFNL (267 aa)) form an amidoligase domain region. A CTP-binding site is contributed by S15. A UTP-binding site is contributed by S15. Residues 16-21 (SLGKGI) and D73 each bind ATP. D73 and E141 together coordinate Mg(2+). Residues 148 to 150 (DME), 188 to 193 (KTKPTQ), and K224 each bind CTP. UTP-binding positions include 188–193 (KTKPTQ) and K224. The 247-residue stretch at 292–538 (KIGFVGKYLS…DFIKSALSKS (247 aa)) folds into the Glutamine amidotransferase type-1 domain. G351 is an L-glutamine binding site. The active-site Nucleophile; for glutamine hydrolysis is C378. Residues 379–382 (LGMQ), E402, and R469 contribute to the L-glutamine site. Active-site residues include H513 and E515.

This sequence belongs to the CTP synthase family. Homotetramer.

It carries out the reaction UTP + L-glutamine + ATP + H2O = CTP + L-glutamate + ADP + phosphate + 2 H(+). The catalysed reaction is L-glutamine + H2O = L-glutamate + NH4(+). The enzyme catalyses UTP + NH4(+) + ATP = CTP + ADP + phosphate + 2 H(+). It participates in pyrimidine metabolism; CTP biosynthesis via de novo pathway; CTP from UDP: step 2/2. Its activity is regulated as follows. Allosterically activated by GTP, when glutamine is the substrate; GTP has no effect on the reaction when ammonia is the substrate. The allosteric effector GTP functions by stabilizing the protein conformation that binds the tetrahedral intermediate(s) formed during glutamine hydrolysis. Inhibited by the product CTP, via allosteric rather than competitive inhibition. Functionally, catalyzes the ATP-dependent amination of UTP to CTP with either L-glutamine or ammonia as the source of nitrogen. Regulates intracellular CTP levels through interactions with the four ribonucleotide triphosphates. This Helicobacter pylori (strain ATCC 700392 / 26695) (Campylobacter pylori) protein is CTP synthase.